Here is a 468-residue protein sequence, read N- to C-terminus: ATP synthase subunit beta (468 aa).

155-162 (GGAGVGKT) is an ATP binding site.

Belongs to the ATPase alpha/beta chains family. F-type ATPases have 2 components, CF(1) - the catalytic core - and CF(0) - the membrane proton channel. CF(1) has five subunits: alpha(3), beta(3), gamma(1), delta(1), epsilon(1). CF(0) has three main subunits: a(1), b(2) and c(9-12). The alpha and beta chains form an alternating ring which encloses part of the gamma chain. CF(1) is attached to CF(0) by a central stalk formed by the gamma and epsilon chains, while a peripheral stalk is formed by the delta and b chains.

Its subcellular location is the cell membrane. The enzyme catalyses ATP + H2O + 4 H(+)(in) = ADP + phosphate + 5 H(+)(out). Produces ATP from ADP in the presence of a proton gradient across the membrane. The catalytic sites are hosted primarily by the beta subunits. This is ATP synthase subunit beta from Enterococcus hirae (strain ATCC 9790 / DSM 20160 / JCM 8729 / LMG 6399 / NBRC 3181 / NCIMB 6459 / NCDO 1258 / NCTC 12367 / WDCM 00089 / R).